The primary structure comprises 245 residues: 8-amino-3,8-dideoxy-manno-octulosonate cytidylyltransferase (245 aa).

It belongs to the KdsB family.

The protein localises to the cytoplasm. The enzyme catalyses 8-amino-3,8-dideoxy-alpha-D-manno-octulosonate + CTP = CMP-8-amino-3,8-dideoxy-alpha-D-manno-oct-2-ulosonate + diphosphate. It participates in bacterial outer membrane biogenesis; lipopolysaccharide biosynthesis. Activates KDO8N (a required 8-carbon sugar) for incorporation into bacterial lipopolysaccharide in the Shewanella genus. In Shewanella piezotolerans (strain WP3 / JCM 13877), this protein is 8-amino-3,8-dideoxy-manno-octulosonate cytidylyltransferase.